A 546-amino-acid polypeptide reads, in one-letter code: Germacrene-D synthase (546 aa).

Residues Asp303, Asp307, Asp448, and Glu456 each coordinate Mg(2+). Residues Asp303–Asp307 carry the DDXXD motif motif.

It belongs to the terpene synthase family. Requires Mg(2+) as cofactor. Mn(2+) is required as a cofactor.

It carries out the reaction (2E,6E)-farnesyl diphosphate = (-)-germacrene D + diphosphate. The protein operates within secondary metabolite biosynthesis; terpenoid biosynthesis. Its function is as follows. Sesquiterpene synthase that catalyzes the formation of germacrene D from trans,trans-farnesyl diphosphate (FPP). The sequence is that of Germacrene-D synthase (GDS) from Ocimum basilicum (Sweet basil).